The primary structure comprises 702 residues: uncharacterized protein (702 aa).

5 stretches are compositionally biased toward low complexity: residues asparagine 306 to asparagine 384, proline 488 to threonine 511, glutamine 559 to asparagine 590, serine 603 to glutamine 612, and asparagine 621 to asparagine 639. Disordered regions lie at residues asparagine 306–glutamate 385, proline 488–glycine 513, and serine 551–tyrosine 645. A VPS9 domain is found at asparagine 337–threonine 489.

This is an uncharacterized protein from Dictyostelium discoideum (Social amoeba).